Consider the following 550-residue polypeptide: Mitochondrial distribution and morphology protein 34 (550 aa).

In terms of domain architecture, SMP-LTD spans 1-208; the sequence is MAFNFNWSPL…CPEQMSKEDH (208 aa). 3 disordered regions span residues 294–313, 358–505, and 519–550; these read VDKP…LVKS, RNAK…ILEQ, and VYDE…TAAS. The span at 300–310 shows a compositional bias: low complexity; sequence SSTTPLTTPSL. Positions 364 to 376 are enriched in basic residues; sequence ANRKKKTRVVNLR. Polar residues-rich tracts occupy residues 391–407 and 458–467; these read MSDS…TMSD and AEISQPQVAR. The segment covering 481-495 has biased composition (basic and acidic residues); that stretch reads SENDKRSDSKRRGPR.

Belongs to the MDM34 family. As to quaternary structure, component of the ER-mitochondria encounter structure (ERMES) or MDM complex, composed of MMM1, MDM10, MDM12 and MDM34.

The protein localises to the mitochondrion outer membrane. Component of the ERMES/MDM complex, which serves as a molecular tether to connect the endoplasmic reticulum (ER) and mitochondria. Components of this complex are involved in the control of mitochondrial shape and protein biogenesis, and function in nonvesicular lipid trafficking between the ER and mitochondria. MDM34 is required for the interaction of the ER-resident membrane protein MMM1 and the outer mitochondrial membrane-resident beta-barrel protein MDM10. The protein is Mitochondrial distribution and morphology protein 34 of Pyricularia oryzae (strain 70-15 / ATCC MYA-4617 / FGSC 8958) (Rice blast fungus).